The chain runs to 315 residues: Malate dehydrogenase (315 aa).

NAD(+) contacts are provided by residues 11–16 (GAGHVG) and D35. Positions 84 and 90 each coordinate substrate. Residues N97 and 120–122 (VTN) each bind NAD(+). 2 residues coordinate substrate: N122 and R153. H177 acts as the Proton acceptor in catalysis.

The protein belongs to the LDH/MDH superfamily. MDH type 3 family.

It catalyses the reaction (S)-malate + NAD(+) = oxaloacetate + NADH + H(+). In terms of biological role, catalyzes the reversible oxidation of malate to oxaloacetate. The sequence is that of Malate dehydrogenase from Thermosulfidibacter takaii (strain DSM 17441 / JCM 13301 / NBRC 103674 / ABI70S6).